The following is a 260-amino-acid chain: 5'-nucleotidase SurE (260 aa).

A divalent metal cation is bound by residues aspartate 8, aspartate 9, serine 39, and asparagine 93.

It belongs to the SurE nucleotidase family. A divalent metal cation is required as a cofactor.

Its subcellular location is the cytoplasm. The enzyme catalyses a ribonucleoside 5'-phosphate + H2O = a ribonucleoside + phosphate. Its function is as follows. Nucleotidase that shows phosphatase activity on nucleoside 5'-monophosphates. In Thermofilum pendens (strain DSM 2475 / Hrk 5), this protein is 5'-nucleotidase SurE.